Here is a 222-residue protein sequence, read N- to C-terminus: Twisted gastrulation protein homolog 1 (222 aa).

The first 24 residues, M1–S24, serve as a signal peptide directing secretion. N-linked (GlcNAc...) asparagine glycosylation is found at N80 and N146.

It belongs to the twisted gastrulation protein family. As to quaternary structure, interacts with CHRD and/or BMP4. This interaction enhances CHRD/BMP4 complex formation. Interacts with BMP7. In terms of tissue distribution, expressed in lymph node, liver, kidney, and lung. Expression in the kidney was stronger in the medulla than in the cortex, particularly in the cells surrounding the medullary tubules. Expressed in growth plate cartilage of long bones, ribs, and digits and to a lesser extent also in the resting zone of the epiphysis, trabecular bone, and vertebral cartilage. Expression seems to be absent from other skeletal tissues including muscle, skin, and fibroblasts.

The protein resides in the secreted. In terms of biological role, may be involved in dorsoventral axis formation. Seems to antagonize BMP signaling by forming ternary complexes with CHRD and BMPs, thereby preventing BMPs from binding to their receptors. In addition to the anti-BMP function, also has pro-BMP activity, partly mediated by cleavage and degradation of CHRD, which releases BMPs from ternary complexes. May be an important modulator of BMP-regulated cartilage development and chondrocyte differentiation. May play a role in thymocyte development. This is Twisted gastrulation protein homolog 1 (Twsg1) from Mus musculus (Mouse).